A 108-amino-acid chain; its full sequence is Parvalbumin alpha (108 aa).

Ala1 is modified (N-acetylalanine). EF-hand domains are found at residues 37–72 and 76–108; these read MSANDVKKVFKAIDADASGFIEEEELKFVLKSFAAD and LTDAETKAFLKAADKDGDGKIGIDEFETLVHEA. Positions 50, 52, 54, 56, 58, 61, 89, 91, 93, 95, and 100 each coordinate Ca(2+).

The protein belongs to the parvalbumin family.

Functionally, in muscle, parvalbumin is thought to be involved in relaxation after contraction. It binds two calcium ions. In Esox lucius (Northern pike), this protein is Parvalbumin alpha.